A 506-amino-acid chain; its full sequence is Steroid (22S)-hydroxylase (506 aa).

The helical transmembrane segment at 12-32 (LLFFLPFILLALLTFYTTTVA) threads the bilayer. Residue C449 participates in heme binding.

This sequence belongs to the cytochrome P450 family. The cofactor is heme. As to expression, highly expressed in roots and leaf blades. Expressed in shoot apex, stems, leaf sheaths, inflorescences and flowers.

The protein resides in the membrane. The enzyme catalyses a C28-steroid + reduced [NADPH--hemoprotein reductase] + O2 = a (22S)-22-hydroxy C28-steroid + oxidized [NADPH--hemoprotein reductase] + H2O + H(+). The catalysed reaction is campesterol + reduced [NADPH--hemoprotein reductase] + O2 = (22S)-22-hydroxycampesterol + oxidized [NADPH--hemoprotein reductase] + H2O + H(+). It carries out the reaction campestanol + reduced [NADPH--hemoprotein reductase] + O2 = 6-deoxycathasterone + oxidized [NADPH--hemoprotein reductase] + H2O + H(+). Its pathway is plant hormone biosynthesis; brassinosteroid biosynthesis. Its function is as follows. Catalyzes the C22-alpha-hydroxylation step in brassinosteroid biosynthesis, which is the rate-limiting step in this biosynthetic pathway. Catalyzes the conversion of campesterol (CR) to (22S)-22-hydroxycampesterol (22-OHCR, 22-hydroxyCR) and of campestanol (CN) to 6-deoxycathasterone (6-deoxoCT). Required for auxin responses involved in the regulation of epidermal cells length of the lamina joint. This Oryza sativa subsp. japonica (Rice) protein is Steroid (22S)-hydroxylase.